A 318-amino-acid polypeptide reads, in one-letter code: Pantothenate kinase (318 aa).

Residue 96 to 103 participates in ATP binding; sequence GSVAVGKS.

This sequence belongs to the prokaryotic pantothenate kinase family.

Its subcellular location is the cytoplasm. It carries out the reaction (R)-pantothenate + ATP = (R)-4'-phosphopantothenate + ADP + H(+). It participates in cofactor biosynthesis; coenzyme A biosynthesis; CoA from (R)-pantothenate: step 1/5. The sequence is that of Pantothenate kinase from Rhodopseudomonas palustris (strain BisA53).